The primary structure comprises 202 residues: Glycerol-3-phosphate acyltransferase (202 aa).

A run of 6 helical transmembrane segments spans residues 2–22 (MIVVMLILSYLIGAIPNGYVI), 54–74 (FIVTFLDIFKGFITVFFPIWF), 85–105 (FFTHGLIVGLFAILGHVYPIY), 120–140 (VVLGVNPILLLILAIIFFGVL), 141–161 (YIFKYVSLSSIIAAICCVIGS), and 162–182 (LIIQDYILFGMSLLVSIILIV).

Belongs to the PlsY family. As to quaternary structure, probably interacts with PlsX.

The protein localises to the cell membrane. It carries out the reaction an acyl phosphate + sn-glycerol 3-phosphate = a 1-acyl-sn-glycero-3-phosphate + phosphate. The protein operates within lipid metabolism; phospholipid metabolism. Catalyzes the transfer of an acyl group from acyl-phosphate (acyl-PO(4)) to glycerol-3-phosphate (G3P) to form lysophosphatidic acid (LPA). This enzyme utilizes acyl-phosphate as fatty acyl donor, but not acyl-CoA or acyl-ACP. In Staphylococcus haemolyticus (strain JCSC1435), this protein is Glycerol-3-phosphate acyltransferase.